Here is a 798-residue protein sequence, read N- to C-terminus: MKFTLSWLKDHLDTTASVDEIAEALTDLGLEVEGIENPAARLAGFTLAHVKSASQHPDADRLRVCVVETNEGEKQIVCGAPNAREGITVVLAKPGDYVPGIDVTLSVGNIRGVESHGMMCSERELELSDEHDGIIELPSGEVGERFIDWLAENDPAKVDPVIEIAITPNRPDALGVAGIARDLAARGIGTLKTRAYAPVPGDFDCPIKVTIDEDTRDGCPLFTGRLIRDVRNGPSPQWLQDQLRAIGLRPISALVDITNYMTYDHNRPLHVFDADKVKGNLRVHRAAGGETLKALDEKEYTFQPGMMVISDDEGAESIAGIMGGDATGCTEETVNVFLESAYWDNVQIALAGRALKINSDARYRFERGVDPAYTLEGLEHATQMILDICGGEASTVVIAGAVPDHSRAYKLDAERVRSLVGMDIPESEQRQTLTRLGFRLEGNMAHVPSWRPDVQGEADLVEEVARIASLTKLVGRPLPRLTDGVPKPVMTPQQRRLSMARRTAASLGYNECVSYTFIDQASAALFGGGTDATMLENPISSEMSHMRPDLLPGLLAAAARNQARGFADLALFEAGPVFHGGEPGEQRAQIAGLLVGRTGPKDVHGAARAVDLYDAKADAEAVLAAMGAPAKVQILRDGDGWWHPGRHGRICLGPKKVLGVFGELHPRVLQAMDVKGPAVAFVLWPEEVPLPRKSGTTRAALALRDLQAVERDFAFVVDAGVEALTLVNAAAGADKALIEDVRVFDEFIGGSLGEGKKSLAITVRLQPTETTLKEKDIEAVSAKIVEKVAKATGGTLRG.

Positions 39–147 constitute a tRNA-binding domain; it reads AARLAGFTLA…PSGEVGERFI (109 aa). Positions 404–475 constitute a B5 domain; the sequence is DHSRAYKLDA…RIASLTKLVG (72 aa). Residues Asp453, Asp459, Glu462, and Glu463 each coordinate Mg(2+). One can recognise an FDX-ACB domain in the interval 704–797; the sequence is RDLQAVERDF…VAKATGGTLR (94 aa).

It belongs to the phenylalanyl-tRNA synthetase beta subunit family. Type 1 subfamily. As to quaternary structure, tetramer of two alpha and two beta subunits. The cofactor is Mg(2+).

The protein resides in the cytoplasm. It catalyses the reaction tRNA(Phe) + L-phenylalanine + ATP = L-phenylalanyl-tRNA(Phe) + AMP + diphosphate + H(+). This chain is Phenylalanine--tRNA ligase beta subunit, found in Ruegeria pomeroyi (strain ATCC 700808 / DSM 15171 / DSS-3) (Silicibacter pomeroyi).